A 425-amino-acid chain; its full sequence is 3-phosphoshikimate 1-carboxyvinyltransferase (425 aa).

Residues lysine 22, serine 23, and arginine 27 each contribute to the 3-phosphoshikimate site. Lysine 22 is a binding site for phosphoenolpyruvate. Phosphoenolpyruvate is bound by residues glycine 95 and arginine 123. 7 residues coordinate 3-phosphoshikimate: serine 169, serine 170, glutamine 171, serine 197, aspartate 313, asparagine 336, and lysine 340. Residue glutamine 171 participates in phosphoenolpyruvate binding. The active-site Proton acceptor is the aspartate 313. Positions 344, 386, and 411 each coordinate phosphoenolpyruvate.

This sequence belongs to the EPSP synthase family. As to quaternary structure, monomer.

The protein localises to the cytoplasm. It catalyses the reaction 3-phosphoshikimate + phosphoenolpyruvate = 5-O-(1-carboxyvinyl)-3-phosphoshikimate + phosphate. It participates in metabolic intermediate biosynthesis; chorismate biosynthesis; chorismate from D-erythrose 4-phosphate and phosphoenolpyruvate: step 6/7. Its function is as follows. Catalyzes the transfer of the enolpyruvyl moiety of phosphoenolpyruvate (PEP) to the 5-hydroxyl of shikimate-3-phosphate (S3P) to produce enolpyruvyl shikimate-3-phosphate and inorganic phosphate. The sequence is that of 3-phosphoshikimate 1-carboxyvinyltransferase from Pseudoalteromonas translucida (strain TAC 125).